The primary structure comprises 257 residues: 5'-nucleotidase SurE (257 aa).

4 residues coordinate a divalent metal cation: Asp15, Asp16, Ser46, and Asn99.

This sequence belongs to the SurE nucleotidase family. It depends on a divalent metal cation as a cofactor.

The protein localises to the cytoplasm. It carries out the reaction a ribonucleoside 5'-phosphate + H2O = a ribonucleoside + phosphate. Its function is as follows. Nucleotidase that shows phosphatase activity on nucleoside 5'-monophosphates. The polypeptide is 5'-nucleotidase SurE (Aliivibrio fischeri (strain ATCC 700601 / ES114) (Vibrio fischeri)).